Consider the following 303-residue polypeptide: MQKVIQVNNQKLKQMAHYYSQFSSKKVPTGALFSISSGSATVTGYYSGKVMFQGKTASAEAAKWQSNSIHSLDTPKKMSTTLPADFANWSVLGSDEVGAGAYFGPLTTAAVYVSQENLEWVRALGIADSKTLTDDRMKKIAPQIIAKLPHHVVNLMPEKYNQLQPLHNVNQMKAISHNFALGKVLDKISPITPQAILIDQFAQQSTYFNYLKNAKQQRIIHENVYFTTKGEQYHLSVAAASILARVVELDAMSKLSVEAGIKLPIGAGREVDTVAAELLRRGIDLKHYAKLHFANTKKAERLL.

An RNase H type-2 domain is found at 89–303; that stretch reads WSVLGSDEVG…ANTKKAERLL (215 aa). A divalent metal cation contacts are provided by Asp95, Glu96, and Asp199.

This sequence belongs to the RNase HII family. RnhC subfamily. Mn(2+) serves as cofactor. It depends on Mg(2+) as a cofactor.

Its subcellular location is the cytoplasm. It catalyses the reaction Endonucleolytic cleavage to 5'-phosphomonoester.. Functionally, endonuclease that specifically degrades the RNA of RNA-DNA hybrids. The protein is Ribonuclease HIII of Leuconostoc mesenteroides subsp. mesenteroides (strain ATCC 8293 / DSM 20343 / BCRC 11652 / CCM 1803 / JCM 6124 / NCDO 523 / NBRC 100496 / NCIMB 8023 / NCTC 12954 / NRRL B-1118 / 37Y).